The following is a 622-amino-acid chain: MEIEEDLNLKILEDVKKLYLQSFDYIKNGISSSLPSDKKFLADDDIDLSRITFLYKFISVNPTLLLINEKTQAKRRIFQGEYLYGKKKIQFNIIAKNLEIERELIQFFKKPYQCYIMHNVQVFQMLNKNKNNNVVEFMDSEDLQSSVDCQLYYLIDESSHVLEDDSMDFISTLTRLSDSFNSNEFVFETNYSIQISQMPKPLNTTHFKLLQPKVVNSFEGVILQVQEGKNILQIEELIDQVYLNSRRDRFYILKVANGKNYMDFIEVYLVYDNEDQEAKQQLQFYLKPFQRILIFQSLKHFTKNLKLFMISFFYSSGVQPNNSNVKNFLVSHKGVEFFSRFDIQKNELLCKDLIKSYNKLPLSNISKLLEDEGVMIRSNMKFQVRVKKVKYFKIRLNCLNCKQEWTVGLKNCINCKGQQSYISYNIQVLVQDQHFLEQQAYIYLYDDLAAQFFNITESEKKELHLHLTKNETFIQLYYSFNKDYPLSIIKFKDKIFNKDITNCIVAYPFADIDNKIFNSQQQIIQDENLRIESEKFIQNFTEDNNLQESKLYYEKFKSKNKQQIFVNGTYISTNYSQGQKICLKPIPCLKVMYVFPQEDIKLSALKIIEEINQLKIQIDQLN.

As to quaternary structure, component of the telomerase holoenzyme complex, composed of the catalytic core (the catalytic subunit TERT, the telomerase RNA template component TER and TAP65/p65), which is associated with two heterotrimeric subcomplexes: (i) the replication protein A (RPA)-related subcomplex, composed of TEB1, RPA2/TEB2 and RPA3/TEB3 and (ii) the CST-like subcomplex, composed of TAP75/p75, TAP45/p45 and TAP19/p19. TEB1 and the CST-like subcomplex are tethered to the catalytic core by TAP50/p50.

The protein resides in the chromosome. Its subcellular location is the telomere. In terms of biological role, component of a CST-like subcomplex of the holoenzyme telomerase ribonucleoprotein complex, which stimulates telomerase complementary-strand synthesis. Telomerase is an essential ribonucleoprotein enzyme that copies new telomeric repeats onto chromosome ends by repetitively synthesizing the short telomere-repeat sequence 5'-TTGGGG-3' using an RNA template component TER. The CST-like subcomplex (also named 7-4-1) binds telomeric single-stranded DNA and coordinates telomere G-strand and C-strand synthesis. The sequence is that of Telomerase-associated protein of 75 kDa from Tetrahymena thermophila (strain SB210).